Here is a 1115-residue protein sequence, read N- to C-terminus: Carbamoyl phosphate synthase large chain (1115 aa).

The carboxyphosphate synthetic domain stretch occupies residues 1 to 407; the sequence is MPRRTDLHHV…ALGKVMRSLE (407 aa). Positions 134, 174, 180, 181, 213, 215, 220, 246, 247, 248, 290, and 304 each coordinate ATP. Positions 138-333 constitute an ATP-grasp 1 domain; it reads KDIVAKAGGE…IAKIAAKLAI (196 aa). 3 residues coordinate Mg(2+): Gln290, Glu304, and Asn306. Positions 290, 304, and 306 each coordinate Mn(2+). Residues 408–559 form an oligomerization domain region; that stretch reads TTRAGFWTAP…ELDPAAETEV (152 aa). The tract at residues 560–965 is carbamoyl phosphate synthetic domain; it reads APQTERPKVL…AFAKSQTAAY (406 aa). The region spanning 693–884 is the ATP-grasp 2 domain; sequence GDLLSAAGLP…LAKACARIML (192 aa). 10 residues coordinate ATP: Arg729, Arg768, Leu770, Glu775, Gly800, Ile801, His802, Ser803, Gln843, and Glu855. Residues Gln843, Glu855, and Asn857 each coordinate Mg(2+). Mn(2+) is bound by residues Gln843, Glu855, and Asn857. An MGS-like domain is found at 966–1113; that stretch reads GSLPAQGTVF…QELHRVIGGV (148 aa). An allosteric domain region spans residues 966–1115; that stretch reads GSLPAQGTVF…LHRVIGGVER (150 aa).

Belongs to the CarB family. Composed of two chains; the small (or glutamine) chain promotes the hydrolysis of glutamine to ammonia, which is used by the large (or ammonia) chain to synthesize carbamoyl phosphate. Tetramer of heterodimers (alpha,beta)4. Mg(2+) serves as cofactor. Requires Mn(2+) as cofactor.

It carries out the reaction hydrogencarbonate + L-glutamine + 2 ATP + H2O = carbamoyl phosphate + L-glutamate + 2 ADP + phosphate + 2 H(+). The enzyme catalyses hydrogencarbonate + NH4(+) + 2 ATP = carbamoyl phosphate + 2 ADP + phosphate + 2 H(+). It participates in amino-acid biosynthesis; L-arginine biosynthesis; carbamoyl phosphate from bicarbonate: step 1/1. It functions in the pathway pyrimidine metabolism; UMP biosynthesis via de novo pathway; (S)-dihydroorotate from bicarbonate: step 1/3. Large subunit of the glutamine-dependent carbamoyl phosphate synthetase (CPSase). CPSase catalyzes the formation of carbamoyl phosphate from the ammonia moiety of glutamine, carbonate, and phosphate donated by ATP, constituting the first step of 2 biosynthetic pathways, one leading to arginine and/or urea and the other to pyrimidine nucleotides. The large subunit (synthetase) binds the substrates ammonia (free or transferred from glutamine from the small subunit), hydrogencarbonate and ATP and carries out an ATP-coupled ligase reaction, activating hydrogencarbonate by forming carboxy phosphate which reacts with ammonia to form carbamoyl phosphate. In Mycobacterium tuberculosis (strain CDC 1551 / Oshkosh), this protein is Carbamoyl phosphate synthase large chain.